Here is a 40-residue protein sequence, read N- to C-terminus: Sauvagin (40 aa).

The residue at position 1 (Gln-1) is a Pyrrolidone carboxylic acid. Isoleucine amide is present on Ile-40.

It belongs to the sauvagine/corticotropin-releasing factor/urotensin I family.

The protein resides in the secreted. Hypotensive and diuretic peptide. The protein is Sauvagin of Phyllomedusa sauvagei (Sauvage's leaf frog).